The following is a 613-amino-acid chain: Immunoglobulin superfamily member 8 (613 aa).

Positions 1–27 (MGALRPTLLPPSLPLLLLLMLGMGCWA) are cleaved as a signal peptide. Ig-like C2-type domains are found at residues 28–149 (REVL…LRVL), 162–286 (PRGR…WAQI), 303–424 (SQLA…EAAS), and 431–560 (PVHV…WYQA). Residues 28–579 (REVLVPEGPL…VYPYMHALDT (552 aa)) are Extracellular-facing. Cys-49 and Cys-127 are oxidised to a cystine. Asn-50 is a glycosylation site (N-linked (GlcNAc...) asparagine). A disordered region spans residues 155-174 (VSAAPPGPRGRQAPTSPPRM). Cys-186 and Cys-270 form a disulfide bridge. An EWI motif motif is present at residues 274-276 (EWI). Cystine bridges form between Cys-326–Cys-406 and Cys-462–Cys-544. Residues Asn-327 and Asn-463 are each glycosylated (N-linked (GlcNAc...) asparagine). A Phosphoserine modification is found at Ser-518. Residues 580 to 600 (LFVPLLVGTGVALVTGATVLG) traverse the membrane as a helical segment. Topologically, residues 601 to 613 (TITCCFMKRLRKR) are cytoplasmic. Residues Cys-604 and Cys-605 are each lipidated (S-palmitoyl cysteine).

Interacts directly with CD82, CD81/tetraspanin-28 and CD9/tetraspanin-29. Also interacts with integrin alpha-3/beta-1 and integrin alpha-4/beta-1. Interacts with HSPA8; this interaction modulates migratory and antigen-presenting capacities of dendritic cells. As to expression, expressed in brain, kidney, testis, liver and placenta with moderate expression in all other tissues. Detected on a majority of B-cells, T-cells, and natural killer cells. Expressed on dendritic cells.

It localises to the cell membrane. In terms of biological role, member of the immunoglobulin superfamily (IgSF) that links tetraspanin-enriched microdomains to the actin cytoskeleton and plays several important roles in innate and adaptive immunity. Acts as an inducible receptor of HSPA8 on dendritic cells to enhance the CCL21/SLC-dependent migration of activated mature dendritic cells while attenuating their antigen-specific stimulatory capacities. In complex with alpha-actinins ACTN1 and ACTN4, regulates actin dynamics in the immune synapse and subsequent T-cell activation. Inhibits the entry of several viruses such as hepatitis C Virus (HCV) or HIV-1. Mechanistically, promotes a change in CD81 organization at the plasma membrane by significantly restricting its diffusion which in turn influences CD81 interaction with Claudin-1/CLDN1, preventing CLDN1 from acting as a co-receptor required for HCV entry. Accumulates at the presynaptic terminal, the producer cell side of the virological synapse, to prevent HIV-1 Env-mediated cell-cell fusion. Highly expressed on malignant cells with antigen presentation defects, interacts with NK receptor KIR3DL2 to suppress NK-cell cytotoxicity. May participate in the regulation of neurite outgrowth and maintenance of the neural network in the adult brain. In Homo sapiens (Human), this protein is Immunoglobulin superfamily member 8 (IGSF8).